The following is a 604-amino-acid chain: Elongation factor 4 (604 aa).

Residues 8–190 form the tr-type G domain; that stretch reads KNKRNFSIIA…AIVHRIPAPN (183 aa). Residues 20–25 and 137–140 contribute to the GTP site; these read DHGKST and NKID.

This sequence belongs to the TRAFAC class translation factor GTPase superfamily. Classic translation factor GTPase family. LepA subfamily.

The protein resides in the cell inner membrane. The enzyme catalyses GTP + H2O = GDP + phosphate + H(+). In terms of biological role, required for accurate and efficient protein synthesis under certain stress conditions. May act as a fidelity factor of the translation reaction, by catalyzing a one-codon backward translocation of tRNAs on improperly translocated ribosomes. Back-translocation proceeds from a post-translocation (POST) complex to a pre-translocation (PRE) complex, thus giving elongation factor G a second chance to translocate the tRNAs correctly. Binds to ribosomes in a GTP-dependent manner. The sequence is that of Elongation factor 4 from Fusobacterium nucleatum subsp. nucleatum (strain ATCC 25586 / DSM 15643 / BCRC 10681 / CIP 101130 / JCM 8532 / KCTC 2640 / LMG 13131 / VPI 4355).